Here is a 253-residue protein sequence, read N- to C-terminus: Probable glutathione transferase omega-2 (253 aa).

The GST N-terminal domain occupies 25–105; sequence GIYRIYNMRF…YLDDLFPESR (81 aa). Cysteine 35 (nucleophile) is an active-site residue. Glutathione-binding positions include lysine 62, valine 75, and 89-90; that span reads ES. Positions 110–238 constitute a GST C-terminal domain; the sequence is DPYEKVQQKL…SQPTEMGVGF (129 aa).

The protein belongs to the GST superfamily. Omega family.

The enzyme catalyses RX + glutathione = an S-substituted glutathione + a halide anion + H(+). The catalysed reaction is L-dehydroascorbate + 2 glutathione = glutathione disulfide + L-ascorbate. It carries out the reaction methylarsonate + 2 glutathione + H(+) = methylarsonous acid + glutathione disulfide + H2O. In terms of biological role, exhibits glutathione-dependent thiol transferase activity. Has dehydroascorbate reductase activity and may contribute to the recycling of ascorbic acid. Participates in the biotransformation of inorganic arsenic and reduces monomethylarsonic acid (MMA). This Caenorhabditis briggsae protein is Probable glutathione transferase omega-2.